A 278-amino-acid chain; its full sequence is Large ribosomal subunit protein uL2 (278 aa).

Disordered regions lie at residues 33–57 (LIRP…KGGG) and 224–278 (VVMN…GKKR). The segment covering 45 to 57 (AHGRITTRHKGGG) has biased composition (basic residues). Over residues 253-268 (PEGRTRKPNKASDKLI) the composition is skewed to basic and acidic residues. Residues 269–278 (VRRRRTGKKR) show a composition bias toward basic residues.

Belongs to the universal ribosomal protein uL2 family. Part of the 50S ribosomal subunit. Forms a bridge to the 30S subunit in the 70S ribosome.

Its function is as follows. One of the primary rRNA binding proteins. Required for association of the 30S and 50S subunits to form the 70S ribosome, for tRNA binding and peptide bond formation. It has been suggested to have peptidyltransferase activity; this is somewhat controversial. Makes several contacts with the 16S rRNA in the 70S ribosome. This chain is Large ribosomal subunit protein uL2, found in Mycobacteroides abscessus (strain ATCC 19977 / DSM 44196 / CCUG 20993 / CIP 104536 / JCM 13569 / NCTC 13031 / TMC 1543 / L948) (Mycobacterium abscessus).